Reading from the N-terminus, the 550-residue chain is Chaperonin GroEL (550 aa).

Residues 30–33 (TLGP), lysine 51, 87–91 (DGTTT), glycine 415, 479–481 (NAA), and aspartate 495 each bind ATP. Residues 525 to 550 (PKDEKSSSELNSAPGNGMGGGMGGMM) form a disordered region. The segment covering 540-550 (NGMGGGMGGMM) has biased composition (gly residues).

Belongs to the chaperonin (HSP60) family. Forms a cylinder of 14 subunits composed of two heptameric rings stacked back-to-back. Interacts with the co-chaperonin GroES.

It localises to the cytoplasm. It catalyses the reaction ATP + H2O + a folded polypeptide = ADP + phosphate + an unfolded polypeptide.. Together with its co-chaperonin GroES, plays an essential role in assisting protein folding. The GroEL-GroES system forms a nano-cage that allows encapsulation of the non-native substrate proteins and provides a physical environment optimized to promote and accelerate protein folding. The sequence is that of Chaperonin GroEL from Buchnera aphidicola subsp. Cinara cedri (strain Cc).